A 286-amino-acid chain; its full sequence is Homoserine kinase (286 aa).

An ATP-binding site is contributed by 78 to 88; sequence PLARGLGSSSS.

This sequence belongs to the GHMP kinase family. Homoserine kinase subfamily.

The protein localises to the cytoplasm. The enzyme catalyses L-homoserine + ATP = O-phospho-L-homoserine + ADP + H(+). Its pathway is amino-acid biosynthesis; L-threonine biosynthesis; L-threonine from L-aspartate: step 4/5. Catalyzes the ATP-dependent phosphorylation of L-homoserine to L-homoserine phosphate. This Streptococcus equi subsp. zooepidemicus (strain H70) protein is Homoserine kinase.